The primary structure comprises 411 residues: MTQIKLLLLSLAITAQSITYDLPSQWDHQWLTQQPLGSDTTCTTSHLTAFQMSKTKDPIFFSTGGTDPFLSPKMLPLNSTAGEQWEFDGVSPDAKMAFVFGFYRDPNYAILGSGNLRVSVEMLWPNGTRFAQVDYPTDSVIEECEWGTRGVWRADEFSYSFEVSRDLQTARVAMHTPQVTGVVYLDSESKPRYPDGKIYPSETSTSEALPYFHFVEPIPVAKSQVDLMILGESYVWSDGVGGMERLWGAFSWFTCLQGMNVVRLHAGPYALSLLSFTSNIKKGNEYPSIALFENGEPVFSSQRTEDSDTADYFTFTKTYDGKVTGTLRDKVTGYELELVSPGEKKHWTFIIDHESLAFEYILGGGHGGSGFAGFVQGGRVGLEQFRGIALTEALTFPKKSPLFRSQYSETS.

The N-terminal stretch at 1–17 is a signal peptide; sequence MTQIKLLLLSLAITAQS.

The protein belongs to the Diels-Alderase family.

It participates in mycotoxin biosynthesis. Diels-Alderase; part of the gene cluster that mediates the biosynthesis of the cytotoxic leucine-containing cytochalasans, including aspochalasin C, aspochalasin E, TMC-169, flavichalasine F, aspergillin PZ, aspochalasin M and flavichalasine G. The first step in the pathway is catalyzed by the hybrid PKS-NRPS ffsA that utilizes 8 units of malonyl-CoA to iteratively assemble the octaketide chain before addition of L-leucine by the C-terminal NRPS modules. Because ffsA lacks a designated enoylreductase (ER) domain, the required activity is provided the enoyl reductase fssC. The methyltransferase (MT) domain of ffsA catalyzes the alpha-methylation at C10 and C14 using S-adenosyl-L-methionine as the methyl-donating cosubstrate. Reduction by the hydrolyase ffsE, followed by dehydration and intra-molecular Diels-Alder cyclization by the Diels-Alderase ffsF then yield the required isoindolone-fused macrocycle. A number of oxidative steps catalyzed by the tailoring cytochrome P450 monooxygenase ffsD, the FAD-linked oxidoreductase ffsJ and the short-chain dehydrogenase/reductase ffsI, are further required to afford the final products. The sequence is that of Diels-Alderase ffsF from Aspergillus flavipes.